Reading from the N-terminus, the 448-residue chain is Fibulin-5 (448 aa).

The signal sequence occupies residues 1–23; sequence MPGLKRILTVTILALWLPHPGNA. An EGF-like 1; calcium-binding domain is found at 42 to 82; that stretch reads DIDECRTIPEACRGDMMCVNQNGGYLCIPRTNPVYRGPYSN. Intrachain disulfides connect Cys46–Cys59, Cys53–Cys68, Cys131–Cys144, Cys138–Cys153, Cys155–Cys166, Cys172–Cys181, Cys177–Cys190, Cys192–Cys205, Cys211–Cys221, Cys217–Cys230, Cys232–Cys245, Cys251–Cys262, Cys258–Cys271, Cys273–Cys286, Cys292–Cys305, Cys299–Cys314, and Cys320–Cys332. The Cell attachment site motif lies at 54–56; the sequence is RGD. An EGF-like 2; calcium-binding domain is found at 127-167; sequence DVDECATDSHQCNPTQICINTEGGYTCSCTDGYWLLEGQCL. The EGF-like 3; calcium-binding domain occupies 168–206; it reads DIDECRYGYCQQLCANVPGSYSCTCNPGFTLNDDGRSCQ. The region spanning 207–246 is the EGF-like 4; calcium-binding domain; it reads DVNECETENPCVQTCVNTYGSFICRCDPGYELEEDGIHCS. The segment at 245 to 448 is interaction with LOXL1; it reads CSDMDECSFS…LRIYVSQYPF (204 aa). The EGF-like 5; calcium-binding domain maps to 247-287; that stretch reads DMDECSFSEFLCQHECVNQPGSYFCSCPPGYVLLEDNRSCQ. Residues Asn283 and Asn296 are each glycosylated (N-linked (GlcNAc...) asparagine). The EGF-like 6; calcium-binding domain occupies 288-333; the sequence is DINECEHRNHTCTPLQTCYNLQGGFKCIDPIVCEEPYLLIGDNRCM.

It belongs to the fibulin family. Homodimer. Monomer, homodimerizes in presence of Ca(2+). Interacts with ELN. Interacts (via N-terminus) with the integrins ITGAV/ITGB3, ITGAV/ITGB5 and ITGA9/ITGB1. Interacts with FBN1 (via N-terminal domain). Forms a ternary complex with ELN and FBN1. Interacts with EFEMP2 with moderate affinity. Interacts with LOXL1. Post-translationally, N-glycosylated.

It localises to the secreted. Its subcellular location is the extracellular space. It is found in the extracellular matrix. In terms of biological role, essential for elastic fiber formation, is involved in the assembly of continuous elastin (ELN) polymer and promotes the interaction of microfibrils and ELN. Stabilizes and organizes elastic fibers in the skin, lung and vasculature. Promotes adhesion of endothelial cells through interaction of integrins and the RGD motif. Vascular ligand for integrin receptors which may play a role in vascular development and remodeling. May act as an adapter that mediates the interaction between FBN1 and ELN. This is Fibulin-5 (Fbln5) from Rattus norvegicus (Rat).